A 469-amino-acid polypeptide reads, in one-letter code: GDNF family receptor alpha-1 (469 aa).

The signal sequence occupies residues Met1–Gly27. 3 repeat units span residues Asp28–Asn116, Lys149–Arg237, and Glu238–Ile341. Cys39 and Cys45 form a disulfide bridge. N-linked (GlcNAc...) asparagine glycans are attached at residues Asn62 and Asn163. 10 cysteine pairs are disulfide-bonded: Cys153–Cys213, Cys160–Cys166, Cys177–Cys191, Cys186–Cys232, Cys215–Cys220, Cys242–Cys312, Cys249–Cys255, Cys266–Cys284, Cys276–Cys336, and Cys314–Cys324. Asn346 and Asn405 each carry an N-linked (GlcNAc...) asparagine glycan. Residue Ser430 is the site of GPI-anchor amidated serine attachment. A propeptide spans His431–Leu469 (removed in mature form).

It belongs to the GDNFR family. Interacts with GDNF ligand and RET: forms a 2:2:2 ternary complex composed of GDNF ligand, GFRA1 and RET receptor.

The protein localises to the cell membrane. It is found in the golgi apparatus. The protein resides in the trans-Golgi network. It localises to the endosome. Its subcellular location is the multivesicular body. Coreceptor for GDNF, a neurotrophic factor that enhances survival and morphological differentiation of dopaminergic neurons and increases their high-affinity dopamine uptake. GDNF-binding leads to autophosphorylation and activation of the RET receptor. This Gallus gallus (Chicken) protein is GDNF family receptor alpha-1 (GFRA1).